Consider the following 141-residue polypeptide: 3-hydroxyacyl-[acyl-carrier-protein] dehydratase FabZ (141 aa).

Residue histidine 48 is part of the active site.

The protein belongs to the thioester dehydratase family. FabZ subfamily.

Its subcellular location is the cytoplasm. The enzyme catalyses a (3R)-hydroxyacyl-[ACP] = a (2E)-enoyl-[ACP] + H2O. In terms of biological role, involved in unsaturated fatty acids biosynthesis. Catalyzes the dehydration of short chain beta-hydroxyacyl-ACPs and long chain saturated and unsaturated beta-hydroxyacyl-ACPs. The protein is 3-hydroxyacyl-[acyl-carrier-protein] dehydratase FabZ of Herpetosiphon aurantiacus (strain ATCC 23779 / DSM 785 / 114-95).